The sequence spans 211 residues: Thymidylate kinase (211 aa).

Residue 11–18 (GPDGAGKT) participates in ATP binding.

The protein belongs to the thymidylate kinase family.

It catalyses the reaction dTMP + ATP = dTDP + ADP. In terms of biological role, phosphorylation of dTMP to form dTDP in both de novo and salvage pathways of dTTP synthesis. This Streptococcus pyogenes serotype M49 (strain NZ131) protein is Thymidylate kinase.